The sequence spans 133 residues: Small ribosomal subunit protein uS11 (133 aa).

Belongs to the universal ribosomal protein uS11 family. In terms of assembly, part of the 30S ribosomal subunit. Interacts with proteins S7 and S18. Binds to IF-3.

Its function is as follows. Located on the platform of the 30S subunit, it bridges several disparate RNA helices of the 16S rRNA. Forms part of the Shine-Dalgarno cleft in the 70S ribosome. This chain is Small ribosomal subunit protein uS11, found in Methylibium petroleiphilum (strain ATCC BAA-1232 / LMG 22953 / PM1).